The sequence spans 1012 residues: F-box DNA helicase 1 (1012 aa).

The tract at residues 1-54 (MHLTADDCEALSRSTEGLSSLTQPLNQRRSRGDVNRGLQPTHRTRTQPGAQGRQ) is disordered. The span at 12-27 (SRSTEGLSSLTQPLNQ) shows a compositional bias: polar residues. The 50-residue stretch at 185-234 (QGSIEDLPDEVLRSIFAFLPVTDLYQSLSLVCRRWRIIVGDPWFIPWKKL) folds into the F-box domain. Positions 427–692 (THEQQRILNH…YYLTQSFRFG (266 aa)) constitute a UvrD-like helicase ATP-binding domain. 448–455 (AFAGTGKT) contributes to the ATP binding site.

This sequence belongs to the helicase family. UvrD subfamily. In terms of assembly, part of the SCF (SKP1-CUL1-F-box) E3 ubiquitin-protein ligase complex SCF(FBH1).

It is found in the nucleus. The protein localises to the chromosome. The catalysed reaction is Couples ATP hydrolysis with the unwinding of duplex DNA by translocating in the 3'-5' direction.. It carries out the reaction ATP + H2O = ADP + phosphate + H(+). It participates in protein modification; protein ubiquitination. In terms of biological role, 3'-5' DNA helicase and substrate-recognition component of the SCF(FBH1) E3 ubiquitin ligase complex that plays a key role in response to stalled/damaged replication forks. Involved in genome maintenance by acting as an anti-recombinogenic helicase and preventing extensive strand exchange during homologous recombination: promotes RAD51 filament dissolution from stalled forks, thereby inhibiting homologous recombination and preventing excessive recombination. Also promotes cell death and DNA double-strand breakage in response to replication stress: promotes the endonucleolytic DNA cleavage following prolonged replication stress via its helicase activity, possibly to eliminate cells with excessive replication stress. The polypeptide is F-box DNA helicase 1 (Gallus gallus (Chicken)).